The following is a 367-amino-acid chain: Glutamate 5-kinase (367 aa).

Position 10 (Lys10) interacts with ATP. The substrate site is built by Ser50, Asp137, and Asn149. ATP-binding positions include 169-170 and 211-217; these read TD and TGGMGTK. In terms of domain architecture, PUA spans 275 to 353; that stretch reads AGELTVDAGA…QQIDAILGYE (79 aa).

This sequence belongs to the glutamate 5-kinase family.

The protein localises to the cytoplasm. The enzyme catalyses L-glutamate + ATP = L-glutamyl 5-phosphate + ADP. It participates in amino-acid biosynthesis; L-proline biosynthesis; L-glutamate 5-semialdehyde from L-glutamate: step 1/2. Catalyzes the transfer of a phosphate group to glutamate to form L-glutamate 5-phosphate. The polypeptide is Glutamate 5-kinase (Klebsiella pneumoniae (strain 342)).